Reading from the N-terminus, the 533-residue chain is Flavin-dependent halogenase gsfI (533 aa).

FAD-binding residues include Gly-14, Gly-17, and Glu-47. Chloride is bound by residues Ser-331 and Gly-332.

The protein belongs to the flavin-dependent halogenase family.

It catalyses the reaction griseophenone C + FADH2 + chloride + O2 = griseophenone B + FAD + 2 H2O + H(+). It functions in the pathway secondary metabolite biosynthesis; terpenoid biosynthesis. Functionally, flavin-dependent halogenase; part of the gene cluster that mediates the biosynthesis of griseofulvin, an important antifungal drug that has been in use for a long time for treating dermatophyte infections. The first step of the pathway is the formation of the heptaketide backbone by gsfA which is initiated by priming with acetyl-CoA, followed by sequential condensations of 6 malonyl-CoA units. The resulting benzophenone can undergo a spontaneous dehydration to form norlichexanthone. However, the true precursor for the griseofulvin biosynthesis is not norlichexanthone, but the heptaketide benzophenone that is O-methylated at 3-OH by gsfB to produce griseophenone D which is further methylated at 9-OH by gsfC to yield griseophenone C. Griseophenone C is then substrate of halogenase gsfI which is responsible for the regio-specific chlorination at the C13 position to form griseophenone B. The cytochrome P450 gsfF catalyzes the coupling of orcinol and phloroglucinol rings in griseophenone B to form desmethyl-dehydrogriseofulvin A which is further methylated at 5-OH by gsfD to yield dehydrogriseofulvin. Finally, gsfE performs stereospecific reduction of enone 18 of dehydrogriseofulvin to afford the final product griseofulvin. This chain is Flavin-dependent halogenase gsfI, found in Penicillium aethiopicum.